Consider the following 234-residue polypeptide: LexA repressor (234 aa).

The H-T-H motif DNA-binding region spans 26–46; it reads FDEMKDALDLRSKSGIHRLIT. Positions 80–107 are disordered; that stretch reads RGFTPSVIEGNLGKVRPPSPQHAEDDSD. Catalysis depends on for autocatalytic cleavage activity residues S155 and K193.

Belongs to the peptidase S24 family. As to quaternary structure, homodimer.

The catalysed reaction is Hydrolysis of Ala-|-Gly bond in repressor LexA.. In terms of biological role, represses a number of genes involved in the response to DNA damage (SOS response), including recA and lexA. In the presence of single-stranded DNA, RecA interacts with LexA causing an autocatalytic cleavage which disrupts the DNA-binding part of LexA, leading to derepression of the SOS regulon and eventually DNA repair. The protein is LexA repressor of Rhodopseudomonas palustris (strain HaA2).